The primary structure comprises 358 residues: 5-amino-6-(D-ribitylamino)uracil--L-tyrosine 4-hydroxyphenyl transferase 2 (358 aa).

In terms of domain architecture, Radical SAM core spans 45-292 (VTFVKNTNIE…ESIKNIQAPR (248 aa)). [4Fe-4S] cluster contacts are provided by cysteine 59, cysteine 63, and cysteine 66.

It belongs to the radical SAM superfamily. CofH family. Consists of two subunits, CofG and CofH. It depends on [4Fe-4S] cluster as a cofactor.

It carries out the reaction 5-amino-6-(D-ribitylamino)uracil + L-tyrosine + S-adenosyl-L-methionine = 5-amino-5-(4-hydroxybenzyl)-6-(D-ribitylimino)-5,6-dihydrouracil + 2-iminoacetate + 5'-deoxyadenosine + L-methionine + H(+). Its pathway is cofactor biosynthesis; coenzyme F0 biosynthesis. Catalyzes the radical-mediated synthesis of 5-amino-5-(4-hydroxybenzyl)-6-(D-ribitylimino)-5,6-dihydrouracil from 5-amino-6-(D-ribitylamino)uracil and L-tyrosine. This is 5-amino-6-(D-ribitylamino)uracil--L-tyrosine 4-hydroxyphenyl transferase 2 from Methanococcus maripaludis (strain DSM 14266 / JCM 13030 / NBRC 101832 / S2 / LL).